The sequence spans 159 residues: Troponin C, skeletal muscle (159 aa).

Position 1 is an N-acetylthreonine (threonine 1). 4 consecutive EF-hand domains span residues 14 to 49 (EMIAEFKAAFDMFDADGGGDISVKELGTVMRMLGQT), 50 to 85 (PTKEELDAIIEEVDEDGSGTIDFEEFLVMMVRQMKE), 90 to 125 (KSEEELAECFRIFDRNMDGYIDAEELAEIFRASGEH), and 126 to 159 (VTDEEIESIMKDGDKNNDGRIDFDEFLKMMEGVQ). The Ca(2+) site is built by aspartate 27, aspartate 29, aspartate 33, glutamate 38, aspartate 63, aspartate 65, serine 67, threonine 69, glutamate 74, aspartate 103, asparagine 105, aspartate 107, tyrosine 109, glutamate 114, aspartate 139, asparagine 141, aspartate 143, arginine 145, and glutamate 150.

This sequence belongs to the troponin C family.

Functionally, troponin is the central regulatory protein of striated muscle contraction. Tn consists of three components: Tn-I which is the inhibitor of actomyosin ATPase, Tn-T which contains the binding site for tropomyosin and Tn-C. The binding of calcium to Tn-C abolishes the inhibitory action of Tn on actin filaments. The protein is Troponin C, skeletal muscle (TNNC2) of Sus scrofa (Pig).